The primary structure comprises 158 residues: Eukaryotic translation initiation factor 5A (158 aa).

A Hypusine modification is found at Lys-51.

Belongs to the eIF-5A family. In terms of processing, lys-51 undergoes hypusination, a unique post-translational modification that consists in the addition of a butylamino group from spermidine to lysine side chain, leading to the formation of the unusual amino acid hypusine. eIF-5As are the only known proteins to undergo this modification, which is essential for their function.

The protein localises to the cytoplasm. Translation factor that promotes translation elongation and termination, particularly upon ribosome stalling at specific amino acid sequence contexts. Binds between the exit (E) and peptidyl (P) site of the ribosome and promotes rescue of stalled ribosome: specifically required for efficient translation of polyproline-containing peptides as well as other motifs that stall the ribosome. Acts as a ribosome quality control (RQC) cofactor by joining the RQC complex to facilitate peptidyl transfer during CAT tailing step. This chain is Eukaryotic translation initiation factor 5A (ANB1), found in Candida albicans (strain SC5314 / ATCC MYA-2876) (Yeast).